The following is a 191-amino-acid chain: Ribosomal RNA small subunit methyltransferase G (191 aa).

Residues Gly62, Phe67, Ile111–Glu112, and Arg124 contribute to the S-adenosyl-L-methionine site.

This sequence belongs to the methyltransferase superfamily. RNA methyltransferase RsmG family.

The protein resides in the cytoplasm. It catalyses the reaction guanosine(527) in 16S rRNA + S-adenosyl-L-methionine = N(7)-methylguanosine(527) in 16S rRNA + S-adenosyl-L-homocysteine. Its function is as follows. Specifically methylates the N7 position of guanine in position 527 of 16S rRNA. This chain is Ribosomal RNA small subunit methyltransferase G, found in Rickettsia typhi (strain ATCC VR-144 / Wilmington).